Consider the following 208-residue polypeptide: A-type ATP synthase subunit E (208 aa).

The disordered stretch occupies residues 37-57; it reads DAEKTAEAEKNKILDNGKKQS.

Belongs to the V-ATPase E subunit family. Has multiple subunits with at least A(3), B(3), C, D, E, F, H, I and proteolipid K(x).

The protein localises to the cell membrane. Component of the A-type ATP synthase that produces ATP from ADP in the presence of a proton gradient across the membrane. This is A-type ATP synthase subunit E from Methanobrevibacter smithii (strain ATCC 35061 / DSM 861 / OCM 144 / PS).